Reading from the N-terminus, the 437-residue chain is Trigger factor (437 aa).

Positions 161-246 (DDQVNIDFVG…VNSVSAPVLP (86 aa)) constitute a PPIase FKBP-type domain.

Belongs to the FKBP-type PPIase family. Tig subfamily.

It localises to the cytoplasm. It catalyses the reaction [protein]-peptidylproline (omega=180) = [protein]-peptidylproline (omega=0). In terms of biological role, involved in protein export. Acts as a chaperone by maintaining the newly synthesized protein in an open conformation. Functions as a peptidyl-prolyl cis-trans isomerase. The sequence is that of Trigger factor from Pseudomonas putida (strain GB-1).